We begin with the raw amino-acid sequence, 128 residues long: Holo-[acyl-carrier-protein] synthase (128 aa).

Mg(2+) contacts are provided by D9 and E60.

The protein belongs to the P-Pant transferase superfamily. AcpS family. The cofactor is Mg(2+).

It localises to the cytoplasm. The catalysed reaction is apo-[ACP] + CoA = holo-[ACP] + adenosine 3',5'-bisphosphate + H(+). Functionally, transfers the 4'-phosphopantetheine moiety from coenzyme A to a Ser of acyl-carrier-protein. The polypeptide is Holo-[acyl-carrier-protein] synthase (Buchnera aphidicola subsp. Baizongia pistaciae (strain Bp)).